Reading from the N-terminus, the 456-residue chain is Protein shifted (456 aa).

The first 30 residues, 1–30 (MTHQGIGCLVKWLYLVLIVHTLLCIGQLEC), serve as a signal peptide directing secretion. A disordered region spans residues 34–112 (HHNRNNNNNN…GGGGSRHNRN (79 aa)). A compositionally biased stretch (basic and acidic residues) spans 44–55 (RRADSSSSEEGH). N-linked (GlcNAc...) asparagine glycosylation occurs at Asn57. The span at 77–87 (HQPRRGQRKKQ) shows a compositional bias: basic residues. A compositionally biased stretch (gly residues) spans 88-107 (QGGGGGGSGGGGGNGGGGGS). One can recognise a WIF domain in the interval 119–261 (LWINEQQLKM…PIRLNFKKEC (143 aa)). N-linked (GlcNAc...) asparagine glycans are attached at residues Asn173, Asn217, and Asn227. 16 disulfides stabilise this stretch: Cys224-Cys261, Cys283-Cys293, Cys287-Cys299, Cys301-Cys310, Cys315-Cys325, Cys319-Cys331, Cys333-Cys342, Cys347-Cys357, Cys351-Cys363, Cys365-Cys374, Cys379-Cys389, Cys383-Cys395, Cys397-Cys406, Cys416-Cys423, Cys418-Cys429, and Cys431-Cys440. EGF-like domains are found at residues 279-311 (TLQE…QYCE), 315-342 (CFPQ…GTQC), 343-375 (EGGI…LRCE), 376-407 (YSKC…DHCE), and 412-441 (QRSI…RHCN). An N-linked (GlcNAc...) asparagine glycan is attached at Asn324. Asn420 is a glycosylation site (N-linked (GlcNAc...) asparagine).

As to quaternary structure, interacts with hh. At the blastoderm stage, it is ubiquitously expressed. As embryogenesis continues, it is expressed in the epidermis and central nervous system, this expression being segmentally modulated. Also highly expressed at the foregut and hindgut throughout embryogenesis. In third instar wing imaginal disks, it is highly expressed in the most anterior and posterior parts of the disk and weakly expressed at the antero/posterior (A/P) compartment border. In the leg disks and the antenna part of the eye-antennal imaginal disk it is also weakly expressed at the A/P compartment border. Weakly expressed in the morphogenetic furrow in the eye primordium.

The protein resides in the secreted. Its subcellular location is the extracellular space. It localises to the extracellular matrix. Required for normal accumulation and movement of lipid-modified hedgehog (hh) morphogen. May act by stabilizing the interaction between heparan sulfate proteoglycans (HSPGs) and hh, HSPGs being required for diffusion of hh morphogen. Not involved in wingless (wg) morphogen movement, suggesting that it may provide HSPG specificity for Hh. The chain is Protein shifted (shf) from Drosophila melanogaster (Fruit fly).